A 1231-amino-acid polypeptide reads, in one-letter code: RNA-binding protein 33 (1231 aa).

A compositionally biased stretch (gly residues) spans 1 to 13; sequence MAAALGAGGGAGA. Disordered regions lie at residues 1–168 and 219–261; these read MAAA…EEEQ and SQVA…FKTE. Ala2 carries the N-acetylalanine modification. A compositionally biased stretch (basic and acidic residues) spans 20–36; sequence QFDKPGAERSWRRRAAD. Acidic residues predominate over residues 37–49; it reads EDWDSELEDDLLG. Ser41 is modified (phosphoserine). The span at 82 to 108 shows a compositional bias: polar residues; it reads FSSQGVTISLNTTSGIVTSFELSDNTN. 2 stretches are compositionally biased toward acidic residues: residues 112-124 and 153-168; these read GEQESEYEQGDDE and LTEDQIEYGDEPEEEQ. The segment covering 224–240 has biased composition (basic and acidic residues); sequence ETHEGGMETLELQKDIK. The segment covering 241–252 has biased composition (acidic residues); sequence EESDEEDDDDEE. Phosphoserine occurs at positions 243 and 271. Disordered stretches follow at residues 297-436 and 452-761; these read FEER…KNIH and PLLP…NLRE. Basic residues predominate over residues 305-316; that stretch reads KQGRYGSRRGGR. Residues 327-344 show a composition bias toward basic and acidic residues; that stretch reads GDQRRDNSERGRMKEHRP. Residues 360 to 379 show a composition bias toward pro residues; it reads LIPPPQPQPPPPPPPPPPQQ. The span at 380–398 shows a compositional bias: low complexity; the sequence is QPIRSLFQQQQLQPLLPLQ. Pro residues predominate over residues 469-483; the sequence is FPGPPEFPQHTPGPV. Arg520 is subject to Asymmetric dimethylarginine. Composition is skewed to pro residues over residues 531 to 540, 604 to 618, 632 to 647, and 661 to 682; these read SPPPPPPPPT, FIPPRQPFLPSPGQP, LHPPLPPPHQPQPQPQ, and PLQPPLQPPHQPPPQHQPPPQH. Composition is skewed to polar residues over residues 713–728 and 736–759; these read QTAQPQPSSSRMQCTP and AASQNISKRPMQQMQPTAPRNSNL. Phosphoserine occurs at positions 792 and 816. Disordered regions lie at residues 796 to 840, 876 to 932, and 998 to 1080; these read RAVV…ETRL, ERLA…FPGA, and ETPH…MRQQ. The segment covering 820 to 829 has biased composition (basic and acidic residues); it reads QPKEEAKPEA. The stretch at 840-891 forms a coiled coil; that stretch reads LYRLKIEEQKRLREEILKQKELRRQQQAGARKKELLERLAQQQQQQQQQQHQ. Positions 880 to 901 are enriched in low complexity; it reads QQQQQQQQQQHQPQQQQQQPQQ. Ser1002 and Ser1010 each carry phosphoserine. Lys1019 participates in a covalent cross-link: Glycyl lysine isopeptide (Lys-Gly) (interchain with G-Cter in SUMO2). Ser1032 and Ser1051 each carry phosphoserine.

Associates with the NXF1-NXT1 RNA export complex. Interacts with ALKBH5; facilitating ALKBH5 recruitment to m6A-containing transcripts. Interacts with SENP1; promoting ALKBH5 deSUMOylation and subsequent activation.

The protein resides in the nucleus. It localises to the cytoplasm. Its function is as follows. RNA reader protein, which recognizes and binds specific RNAs, thereby regulating RNA metabolic processes, such as mRNA export, mRNA stability and/or translation. Binds a subset of intronless RNAs containing GC-rich elements, such as NORAD, and promotes their nuclear export by recruiting target RNAs to components of the NXF1-NXT1 RNA export machinery. Specifically recognizes and binds N6-methyladenosine (m6A)-containing mRNAs, promoting their demethylation by ALKBH5. Acts as an molecular adapter, which (1) promotes ALKBH5 recruitment to m6A-containing transcripts and (2) activates ALKBH5 demethylase activity by recruiting SENP1, leading to ALKBH5 deSUMOylation and subsequent activation. This is RNA-binding protein 33 from Mus musculus (Mouse).